We begin with the raw amino-acid sequence, 565 residues long: Dihydroxy-acid dehydratase (565 aa).

C50 is a binding site for [2Fe-2S] cluster. D82 is a binding site for Mg(2+). [2Fe-2S] cluster is bound at residue C123. Mg(2+) is bound by residues D124 and K125. The residue at position 125 (K125) is an N6-carboxylysine. Residue C195 coordinates [2Fe-2S] cluster. E447 is a Mg(2+) binding site. S473 acts as the Proton acceptor in catalysis.

This sequence belongs to the IlvD/Edd family. As to quaternary structure, homodimer. The cofactor is [2Fe-2S] cluster. Mg(2+) serves as cofactor.

It carries out the reaction (2R)-2,3-dihydroxy-3-methylbutanoate = 3-methyl-2-oxobutanoate + H2O. The catalysed reaction is (2R,3R)-2,3-dihydroxy-3-methylpentanoate = (S)-3-methyl-2-oxopentanoate + H2O. The protein operates within amino-acid biosynthesis; L-isoleucine biosynthesis; L-isoleucine from 2-oxobutanoate: step 3/4. Its pathway is amino-acid biosynthesis; L-valine biosynthesis; L-valine from pyruvate: step 3/4. In terms of biological role, functions in the biosynthesis of branched-chain amino acids. Catalyzes the dehydration of (2R,3R)-2,3-dihydroxy-3-methylpentanoate (2,3-dihydroxy-3-methylvalerate) into 2-oxo-3-methylpentanoate (2-oxo-3-methylvalerate) and of (2R)-2,3-dihydroxy-3-methylbutanoate (2,3-dihydroxyisovalerate) into 2-oxo-3-methylbutanoate (2-oxoisovalerate), the penultimate precursor to L-isoleucine and L-valine, respectively. This is Dihydroxy-acid dehydratase from Halorhodospira halophila (strain DSM 244 / SL1) (Ectothiorhodospira halophila (strain DSM 244 / SL1)).